Here is a 157-residue protein sequence, read N- to C-terminus: UPF0303 protein NT01EI_1570 (157 aa).

It belongs to the UPF0303 family.

The sequence is that of UPF0303 protein NT01EI_1570 from Edwardsiella ictaluri (strain 93-146).